The following is a 328-amino-acid chain: Beta-ketoacyl-[acyl-carrier-protein] synthase III (328 aa).

Residues cysteine 122 and histidine 255 contribute to the active site. Positions 256–260 (QANIR) are ACP-binding. The active site involves asparagine 285.

Belongs to the thiolase-like superfamily. FabH family. Homodimer.

It localises to the cytoplasm. The enzyme catalyses malonyl-[ACP] + acetyl-CoA + H(+) = 3-oxobutanoyl-[ACP] + CO2 + CoA. The protein operates within lipid metabolism; fatty acid biosynthesis. Its function is as follows. Catalyzes the condensation reaction of fatty acid synthesis by the addition to an acyl acceptor of two carbons from malonyl-ACP. Catalyzes the first condensation reaction which initiates fatty acid synthesis and may therefore play a role in governing the total rate of fatty acid production. Possesses both acetoacetyl-ACP synthase and acetyl transacylase activities. Its substrate specificity determines the biosynthesis of branched-chain and/or straight-chain of fatty acids. The polypeptide is Beta-ketoacyl-[acyl-carrier-protein] synthase III (Polynucleobacter necessarius subsp. necessarius (strain STIR1)).